Reading from the N-terminus, the 343-residue chain is Selenide, water dikinase (343 aa).

Residue U16 is part of the active site. A non-standard amino acid (selenocysteine) is located at residue U16. ATP contacts are provided by residues K19 and 46-48 (GAE). Residue D49 participates in Mg(2+) binding. Residues D66, D89, and 137-139 (GHT) each bind ATP. Residue D89 coordinates Mg(2+). D225 is a Mg(2+) binding site.

The protein belongs to the selenophosphate synthase 1 family. Class I subfamily. As to quaternary structure, homodimer. It depends on Mg(2+) as a cofactor.

It catalyses the reaction hydrogenselenide + ATP + H2O = selenophosphate + AMP + phosphate + 2 H(+). In terms of biological role, synthesizes selenophosphate from selenide and ATP. The sequence is that of Selenide, water dikinase from Citrifermentans bemidjiense (strain ATCC BAA-1014 / DSM 16622 / JCM 12645 / Bem) (Geobacter bemidjiensis).